The following is a 277-amino-acid chain: Myelin proteolipid protein (277 aa).

The Cytoplasmic segment spans residues 1–10; that stretch reads MGLLECCARC. Residues Cys6, Cys7, and Cys10 are each lipidated (S-palmitoyl cysteine). Residues 11–36 traverse the membrane as a helical segment; it reads LVGAPFASLVATGLCFFGVALFCGCG. The Extracellular segment spans residues 37 to 59; the sequence is HEALTGTEKLIETYFSKNYQDYE. A helical membrane pass occupies residues 60–88; it reads YLINVIHAFQYVIYGTASFFFLYGALLLA. The Cytoplasmic portion of the chain corresponds to 89–151; it reads EGFYTTGAVR…LGKWLGHPDK (63 aa). A lipid anchor (S-palmitoyl cysteine) is attached at Cys109. The residue at position 114 (Ser114) is a Phosphoserine. Phosphothreonine occurs at positions 116 and 118. Cys141 carries S-palmitoyl cysteine lipidation. A helical transmembrane segment spans residues 152–178; sequence FVGITYALTVVWLLVFACSAVPVYIYF. Topologically, residues 179–238 are extracellular; it reads NTWTTCQSIAFPSKTSASIGSLCADARMYGVLPWNAFPGKVCGSNLLSICKTAEFQMTFH. Cystine bridges form between Cys184/Cys228 and Cys201/Cys220. A lipid anchor (O-palmitoyl serine) is attached at Ser199. Residues 239–268 form a helical membrane-spanning segment; sequence LFIAAFVGAAATLISLLTFMIAATYNFAVL. Residues 269 to 277 are Cytoplasmic-facing; it reads KLMGRGTKF.

Belongs to the myelin proteolipid protein family.

The protein resides in the cell membrane. It is found in the myelin membrane. This is the major myelin protein from the central nervous system. It plays an important role in the formation or maintenance of the multilamellar structure of myelin. This Macaca fascicularis (Crab-eating macaque) protein is Myelin proteolipid protein (PLP1).